The sequence spans 382 residues: Dual-specificity RNA methyltransferase RlmN (382 aa).

Glu91 (proton acceptor) is an active-site residue. In terms of domain architecture, Radical SAM core spans 97-339 (ETDRGTLCIS…TTVRKTRGDD (243 aa)). Cys104 and Cys344 are disulfide-bonded. The [4Fe-4S] cluster site is built by Cys111, Cys115, and Cys118. S-adenosyl-L-methionine is bound by residues 165–166 (GE), Ser197, 219–221 (SLH), and Asn301. The active-site S-methylcysteine intermediate is the Cys344.

This sequence belongs to the radical SAM superfamily. RlmN family. It depends on [4Fe-4S] cluster as a cofactor.

The protein resides in the cytoplasm. It catalyses the reaction adenosine(2503) in 23S rRNA + 2 reduced [2Fe-2S]-[ferredoxin] + 2 S-adenosyl-L-methionine = 2-methyladenosine(2503) in 23S rRNA + 5'-deoxyadenosine + L-methionine + 2 oxidized [2Fe-2S]-[ferredoxin] + S-adenosyl-L-homocysteine. It carries out the reaction adenosine(37) in tRNA + 2 reduced [2Fe-2S]-[ferredoxin] + 2 S-adenosyl-L-methionine = 2-methyladenosine(37) in tRNA + 5'-deoxyadenosine + L-methionine + 2 oxidized [2Fe-2S]-[ferredoxin] + S-adenosyl-L-homocysteine. Specifically methylates position 2 of adenine 2503 in 23S rRNA and position 2 of adenine 37 in tRNAs. m2A2503 modification seems to play a crucial role in the proofreading step occurring at the peptidyl transferase center and thus would serve to optimize ribosomal fidelity. The chain is Dual-specificity RNA methyltransferase RlmN from Polaromonas sp. (strain JS666 / ATCC BAA-500).